The primary structure comprises 192 residues: Ion-translocating oxidoreductase complex subunit B (192 aa).

Residues 1-26 (MNTIWIAVAAISLLGLAFGAILGYAS) form a hydrophobic region. Residues 32–91 (EDDPVVEKIDEILPQSQCGQCGYPGCRPYAEAISCNGEKINRCAPGGEAVMLKISELLNV) form the 4Fe-4S domain. C49, C52, C57, C74, C117, C120, C123, C127, C147, C150, C153, and C157 together coordinate [4Fe-4S] cluster. 4Fe-4S ferredoxin-type domains follow at residues 108 to 137 (VVAV…GATR) and 138 to 167 (AMHT…LQPV).

The protein belongs to the 4Fe4S bacterial-type ferredoxin family. RnfB subfamily. As to quaternary structure, the complex is composed of six subunits: RsxA, RsxB, RsxC, RsxD, RsxE and RsxG. [4Fe-4S] cluster serves as cofactor.

Its subcellular location is the cell inner membrane. Part of a membrane-bound complex that couples electron transfer with translocation of ions across the membrane. Required to maintain the reduced state of SoxR. This is Ion-translocating oxidoreductase complex subunit B from Escherichia fergusonii (strain ATCC 35469 / DSM 13698 / CCUG 18766 / IAM 14443 / JCM 21226 / LMG 7866 / NBRC 102419 / NCTC 12128 / CDC 0568-73).